The chain runs to 237 residues: Orotidine 5'-phosphate decarboxylase (237 aa).

Substrate is bound by residues aspartate 17, lysine 39, 66–75 (DLKLHDIGNT), threonine 121, arginine 182, glutamine 191, glycine 211, and arginine 212. The active-site Proton donor is the lysine 68.

Belongs to the OMP decarboxylase family. Type 1 subfamily. Homodimer.

The catalysed reaction is orotidine 5'-phosphate + H(+) = UMP + CO2. Its pathway is pyrimidine metabolism; UMP biosynthesis via de novo pathway; UMP from orotate: step 2/2. Functionally, catalyzes the decarboxylation of orotidine 5'-monophosphate (OMP) to uridine 5'-monophosphate (UMP). This is Orotidine 5'-phosphate decarboxylase from Rhodopseudomonas palustris (strain TIE-1).